Here is a 431-residue protein sequence, read N- to C-terminus: SH2 domain-containing protein 4B (431 aa).

Residues 201 to 235 (QASENEEREWEEQLRRSKAADEERSRRAQRARDEY) are disordered. Basic and acidic residues predominate over residues 211–235 (EEQLRRSKAADEERSRRAQRARDEY). Residues 325–417 (WFHGIISRES…SGGELLQEPC (93 aa)) enclose the SH2 domain.

This is SH2 domain-containing protein 4B (Sh2d4b) from Mus musculus (Mouse).